The primary structure comprises 480 residues: Adenylosuccinate lyase (480 aa).

AMP is bound by residues R14, Y15, R79, H80, and D81. Fumarate is bound at residue H80. Residue H153 is the Proton donor/acceptor of the active site. Q236 contributes to the AMP binding site. Q236 contacts fumarate. Q236 is a binding site for N(6)-(1,2-dicarboxyethyl)-AMP. S284 serves as the catalytic Proton donor/acceptor. Fumarate contacts are provided by S285, K290, and N292. Residues S285, K290, and N292 each coordinate N(6)-(1,2-dicarboxyethyl)-AMP. AMP is bound at residue R298. Residues R324, S329, and R333 each coordinate N(6)-(1,2-dicarboxyethyl)-AMP. 2 residues coordinate AMP: S329 and R333.

This sequence belongs to the lyase 1 family. Adenylosuccinate lyase subfamily. In terms of assembly, homotetramer.

It carries out the reaction N(6)-(1,2-dicarboxyethyl)-AMP = fumarate + AMP. The protein operates within purine metabolism; AMP biosynthesis via salvage pathway. Its function is as follows. Catalyzes conversion of succinyladenosine monophosphate (SAMP) to AMP and fumarate on the purine salvage pathway. The polypeptide is Adenylosuccinate lyase (Schistosoma mansoni (Blood fluke)).